Here is a 115-residue protein sequence, read N- to C-terminus: NADH-ubiquinone oxidoreductase chain 3 (115 aa).

An N-formylmethionine modification is found at Met-1. Helical transmembrane passes span 3 to 23, 55 to 75, and 84 to 104; these read LMLA…IAFW, FFLV…LLPL, and LNTM…SLAY.

In terms of assembly, core subunit of respiratory chain NADH dehydrogenase (Complex I) which is composed of 45 different subunits. Interacts with TMEM186. Interacts with TMEM242.

The protein resides in the mitochondrion inner membrane. It carries out the reaction a ubiquinone + NADH + 5 H(+)(in) = a ubiquinol + NAD(+) + 4 H(+)(out). Its function is as follows. Core subunit of the mitochondrial membrane respiratory chain NADH dehydrogenase (Complex I) which catalyzes electron transfer from NADH through the respiratory chain, using ubiquinone as an electron acceptor. Essential for the catalytic activity of complex I. This chain is NADH-ubiquinone oxidoreductase chain 3, found in Bos taurus (Bovine).